Here is a 303-residue protein sequence, read N- to C-terminus: Histone deacetylase HDT2 (303 aa).

Positions E100 to L112 are enriched in acidic residues. The disordered stretch occupies residues E100–C282. Positions E119–E133 are enriched in basic and acidic residues. Positions D154 to T203 are enriched in acidic residues. Basic and acidic residues predominate over residues P204 to A217. The C2H2-type zinc-finger motif lies at V277 to H300.

It belongs to the histone deacetylase HD2 family. In terms of assembly, multimer. Possibly forms a homotrimer with HDT1 and/or HDT3.

The protein resides in the nucleus. It localises to the nucleolus. Its function is as follows. Mediates the deacetylation of lysine residues on the N-terminal part of the core histones (H2A, H2B, H3 and H4). Histone deacetylation gives a tag for epigenetic repression and plays an important role in transcriptional regulation, cell cycle progression and developmental events. This chain is Histone deacetylase HDT2 (HDT2), found in Zea mays (Maize).